The sequence spans 495 residues: F(420)H(2) dehydrogenase subunit M (495 aa).

The next 15 helical transmembrane spans lie at 1 to 21 (MLPV…VTFF), 27 to 47 (LAAG…LYAY), 57 to 77 (MQFY…SVGI), 80 to 100 (VSMP…LFTW), 108 to 128 (NRFY…FVAL), 130 to 150 (FVVF…IVNL), 163 to 183 (FFIY…GLFY), 215 to 235 (IFLA…FHSW), 249 to 269 (ILFI…LPML), 277 to 297 (LMIM…ALLA), 315 to 335 (MGYV…GAMF), 338 to 358 (FSHG…QTAA), 378 to 398 (VAMM…GFIA), 412 to 432 (VFVV…LWAM), and 450 to 470 (INSI…YFGL).

This sequence belongs to the complex I subunit 4 family. In terms of assembly, the FPO complex is composed of at least 13 different subunits. FpoA, FpoH, FpoJ, FpoK, FpoL, FpoM and FpoN proteins constitute the membrane sector of the complex.

It localises to the cell membrane. It catalyses the reaction methanophenazine + reduced coenzyme F420-(gamma-L-Glu)(n) = dihydromethanophenazine + oxidized coenzyme F420-(gamma-L-Glu)(n) + H(+). In terms of biological role, component of the F(420)H(2) dehydrogenase (FPO complex) which is part of the energy-conserving F(420)H(2):heterodisulfide oxidoreductase system. The membrane-bound electron transfer system of the complex plays an important role in the metabolism of methylotrophic methanogens when the organisms grow on methanol or methylamines. Catalyzes the oxidation of methanophenazine to dihydromethanophenazine. It shuttles electrons from F(420)H(2), via FAD and iron-sulfur (Fe-S) centers, to methanophenazine (an electron carrier in the membrane). It couples the redox reaction to proton translocation (for every two electrons transferred, two hydrogen ions are translocated across the cytoplasmic membrane), and thus conserves the redox energy in a proton gradient. It also catalyzes the oxidation of F(420)H(2) with quinones such as 2,3-dimethyl-1,4-naphthoquinone, 2-methyl-1,4-naphthoquinone and tetramethyl-p-benzoquinone. The sequence is that of F(420)H(2) dehydrogenase subunit M (fpoM) from Methanosarcina mazei (strain ATCC BAA-159 / DSM 3647 / Goe1 / Go1 / JCM 11833 / OCM 88) (Methanosarcina frisia).